Reading from the N-terminus, the 473-residue chain is Photosystem II CP43 reaction center protein (473 aa).

Positions 1-14 (MKTLYSLRRFYPVE) are excised as a propeptide. An N-acetylthreonine modification is found at threonine 15. Threonine 15 bears the Phosphothreonine mark. Helical transmembrane passes span 69–93 (LFEV…PHLA), 134–155 (LLGP…KDRN), 178–200 (KALY…RKIT), 255–275 (KPFA…LSYS), and 291–312 (WFNN…ASQA). Residue glutamate 367 participates in [CaMn4O5] cluster binding. The helical transmembrane segment at 447–471 (RARAAAAGFEKGIDRDFEPVLSMTP) threads the bilayer.

It belongs to the PsbB/PsbC family. PsbC subfamily. In terms of assembly, PSII is composed of 1 copy each of membrane proteins PsbA, PsbB, PsbC, PsbD, PsbE, PsbF, PsbH, PsbI, PsbJ, PsbK, PsbL, PsbM, PsbT, PsbX, PsbY, PsbZ, Psb30/Ycf12, at least 3 peripheral proteins of the oxygen-evolving complex and a large number of cofactors. It forms dimeric complexes. Binds multiple chlorophylls and provides some of the ligands for the Ca-4Mn-5O cluster of the oxygen-evolving complex. It may also provide a ligand for a Cl- that is required for oxygen evolution. PSII binds additional chlorophylls, carotenoids and specific lipids. serves as cofactor.

The protein localises to the plastid. Its subcellular location is the chloroplast thylakoid membrane. One of the components of the core complex of photosystem II (PSII). It binds chlorophyll and helps catalyze the primary light-induced photochemical processes of PSII. PSII is a light-driven water:plastoquinone oxidoreductase, using light energy to abstract electrons from H(2)O, generating O(2) and a proton gradient subsequently used for ATP formation. This chain is Photosystem II CP43 reaction center protein, found in Vitis vinifera (Grape).